We begin with the raw amino-acid sequence, 95 residues long: Aspartyl/glutamyl-tRNA(Asn/Gln) amidotransferase subunit C (95 aa).

It belongs to the GatC family. In terms of assembly, heterotrimer of A, B and C subunits.

It catalyses the reaction L-glutamyl-tRNA(Gln) + L-glutamine + ATP + H2O = L-glutaminyl-tRNA(Gln) + L-glutamate + ADP + phosphate + H(+). It carries out the reaction L-aspartyl-tRNA(Asn) + L-glutamine + ATP + H2O = L-asparaginyl-tRNA(Asn) + L-glutamate + ADP + phosphate + 2 H(+). Functionally, allows the formation of correctly charged Asn-tRNA(Asn) or Gln-tRNA(Gln) through the transamidation of misacylated Asp-tRNA(Asn) or Glu-tRNA(Gln) in organisms which lack either or both of asparaginyl-tRNA or glutaminyl-tRNA synthetases. The reaction takes place in the presence of glutamine and ATP through an activated phospho-Asp-tRNA(Asn) or phospho-Glu-tRNA(Gln). The polypeptide is Aspartyl/glutamyl-tRNA(Asn/Gln) amidotransferase subunit C (Alkalilimnicola ehrlichii (strain ATCC BAA-1101 / DSM 17681 / MLHE-1)).